The sequence spans 107 residues: Nucleoid-associated protein Lferr_1592 (107 aa).

The protein belongs to the YbaB/EbfC family. As to quaternary structure, homodimer.

It localises to the cytoplasm. The protein localises to the nucleoid. Functionally, binds to DNA and alters its conformation. May be involved in regulation of gene expression, nucleoid organization and DNA protection. In Acidithiobacillus ferrooxidans (strain ATCC 53993 / BNL-5-31) (Leptospirillum ferrooxidans (ATCC 53993)), this protein is Nucleoid-associated protein Lferr_1592.